The following is a 275-amino-acid chain: MDFLDFEKVFSFYSKATKKGFSPFFVPALEKAEEPAGNFFLDRKGNLFSIREDFTKTVLNHRKRYSPDSQIKVWYADFVYRYSGSDLVAEYQLGLEKVPRNSLDDSLEVLEIIVESASEFFEGPVIVEIGHTGVYEDLLKEIPKDLHEKVLNLIDTKNLAEIEFLSHMKKIDLSRVEKIIEDSIYRRSPEHLKTMDLPLSVREDLLSASSFLQEKFPTVSVEIDLTLARTIEEYCGLIFTIYDTSSSRLVAAGGEYTVNGEKGVGGSIFLEGKTC.

The protein belongs to the class-II aminoacyl-tRNA synthetase family. HisZ subfamily. As to quaternary structure, heteromultimer composed of HisG and HisZ subunits.

Its subcellular location is the cytoplasm. It participates in amino-acid biosynthesis; L-histidine biosynthesis; L-histidine from 5-phospho-alpha-D-ribose 1-diphosphate: step 1/9. Functionally, required for the first step of histidine biosynthesis. May allow the feedback regulation of ATP phosphoribosyltransferase activity by histidine. In Thermotoga maritima (strain ATCC 43589 / DSM 3109 / JCM 10099 / NBRC 100826 / MSB8), this protein is ATP phosphoribosyltransferase regulatory subunit (hisZ).